Consider the following 257-residue polypeptide: Acetylglutamate kinase (257 aa).

Substrate contacts are provided by residues 40 to 41, Arg-62, and Asn-155; that span reads GG.

Belongs to the acetylglutamate kinase family. ArgB subfamily.

It is found in the cytoplasm. It carries out the reaction N-acetyl-L-glutamate + ATP = N-acetyl-L-glutamyl 5-phosphate + ADP. It participates in amino-acid biosynthesis; L-arginine biosynthesis; N(2)-acetyl-L-ornithine from L-glutamate: step 2/4. Its function is as follows. Catalyzes the ATP-dependent phosphorylation of N-acetyl-L-glutamate. The sequence is that of Acetylglutamate kinase from Shouchella clausii (strain KSM-K16) (Alkalihalobacillus clausii).